Reading from the N-terminus, the 97-residue chain is Small ribosomal subunit protein bS6 (97 aa).

It belongs to the bacterial ribosomal protein bS6 family.

In terms of biological role, binds together with bS18 to 16S ribosomal RNA. The polypeptide is Small ribosomal subunit protein bS6 (Syntrophomonas wolfei subsp. wolfei (strain DSM 2245B / Goettingen)).